Here is a 449-residue protein sequence, read N- to C-terminus: Exodeoxyribonuclease 7 large subunit (449 aa).

It belongs to the XseA family. As to quaternary structure, heterooligomer composed of large and small subunits.

Its subcellular location is the cytoplasm. The enzyme catalyses Exonucleolytic cleavage in either 5'- to 3'- or 3'- to 5'-direction to yield nucleoside 5'-phosphates.. Functionally, bidirectionally degrades single-stranded DNA into large acid-insoluble oligonucleotides, which are then degraded further into small acid-soluble oligonucleotides. This is Exodeoxyribonuclease 7 large subunit from Salmonella schwarzengrund (strain CVM19633).